Consider the following 625-residue polypeptide: Replication protein E1 (625 aa).

Residues 83 to 85 carry the Nuclear localization signal motif; it reads KRK. Residues S89, S93, and S107 each carry the phosphoserine; by host modification. The short motif at 106 to 115 is the Nuclear export signal element; the sequence is LSPRLNEISL. The interval 147–169 is disordered; the sequence is GGGGQDVQAGGKENTRPDDGGGD. The segment at 162–328 is DNA-binding region; that stretch reads RPDDGGGDAT…QTMFQHGLED (167 aa). The SF3 helicase domain occupies 427–577; it reads VEFIAFLAAL…FPFDQNGNPV (151 aa). 453–460 is a binding site for ATP; sequence GPPNTGKS. A Glycyl lysine isopeptide (Lys-Gly) (interchain with G-Cter in SUMO) cross-link involves residue K534.

This sequence belongs to the papillomaviridae E1 protein family. As to quaternary structure, can form hexamers. Interacts with E2 protein; this interaction increases E1 DNA binding specificity. Interacts with host DNA polymerase subunit POLA2. Interacts with host single stranded DNA-binding protein RPA1. Interacts with host TOP1; this interaction stimulates the enzymatic activity of TOP1. Phosphorylated. Post-translationally, sumoylated.

The protein localises to the host nucleus. The enzyme catalyses Couples ATP hydrolysis with the unwinding of duplex DNA by translocating in the 3'-5' direction.. It catalyses the reaction ATP + H2O = ADP + phosphate + H(+). In terms of biological role, ATP-dependent DNA 3'-5' helicase required for initiation of viral DNA replication. It forms a complex with the viral E2 protein. The E1-E2 complex binds to the replication origin which contains binding sites for both proteins. During the initial step, a dimer of E1 interacts with a dimer of protein E2 leading to a complex that binds the viral origin of replication with high specificity. Then, a second dimer of E1 displaces the E2 dimer in an ATP-dependent manner to form the E1 tetramer. Following this, two E1 monomers are added to each half of the site, which results in the formation of two E1 trimers on the viral ori. Subsequently, two hexamers will be created. The double hexamer acts as a bi-directional helicase machinery and unwinds the viral DNA and then recruits the host DNA polymerase to start replication. The chain is Replication protein E1 from Macaca mulatta (Rhesus macaque).